The primary structure comprises 487 residues: GPI mannosyltransferase 1 (487 aa).

Transmembrane regions (helical) follow at residues 26–46 (PLPLYVSAFLLRIVLLLYGLW), 87–107 (ILAWLLLPTTWTAGAQWGPWA), and 121–141 (VLFAAADLVAGWLIEQVLVMG). The segment at 147–175 (SAAKGKEKDTEKTKEGGKKGPSVTASTGM) is disordered. Residues 150–164 (KGKEKDTEKTKEGGK) show a composition bias toward basic and acidic residues. 7 consecutive transmembrane segments (helical) span residues 205–225 (LLGVLVMALLWAVLSRRITLA), 227–247 (LLLGFSVHFKIYPFIYAPAIV), 289–309 (LLLAFTSLATFLSLNFLMYRL), 359–379 (IESLAFLPQLVLSTILIPLTL), 393–413 (FAFVTFNKVCTSQYFLWYLVL), 429–449 (MGLVALGLWVLGQALWLQQAY), and 462–482 (GLWMASLGFFVVNCWILGVIV).

It belongs to the PIGM family.

The protein resides in the endoplasmic reticulum membrane. It functions in the pathway glycolipid biosynthesis; glycosylphosphatidylinositol-anchor biosynthesis. Its function is as follows. Mannosyltransferase involved in glycosylphosphatidylinositol-anchor biosynthesis. Transfers the first alpha-1,4-mannose to GlcN-acyl-PI during GPI precursor assembly. Required for cell wall integrity. The chain is GPI mannosyltransferase 1 (gim-1) from Neurospora crassa (strain ATCC 24698 / 74-OR23-1A / CBS 708.71 / DSM 1257 / FGSC 987).